Reading from the N-terminus, the 498-residue chain is MRINPTTSGSGVSTLEKQTLGRIVQIIGPVLDVAFPPGKMPNIYNALVVKGRDSAGQPINVTCEVQQLLGNNRVRAVAMSATDGLTRGMEVIDMGAAISVPVGGATLGRIFNVLGEPVDNLGPVDTSTTSPIHRSAPAFIQLDTKLAIFETGIKVVDLLAPYRRGGKIGLFGGAGVGKTVLIMELINNIAKAHGGVSVFGGVGERTREGNDLYMEMKESGVINEENIAESKVALVYGQMNEPPGARMRVGLTALTMAEYFRDVNEQDVLLFIDNIFRFVQAGSEVSALLGRMPSAVGYQPTLSTEMGSLQERITSTKEGSITSIQAVYVPADDLTDPAPATTFAHLDATTVLSRGLAAKGIYPAVDPLDSTSTMLQPRIVGEEHYETAQRVKETLQRYKELQDIIAILGLDELSEEDRLTVARARKIERFLSQPFFVAEVFTGSPGKYVGLAETIRGFQLILSGELDSFPEQAFYLVGNIDEATAKAMNLEMESNLKK.

ATP is bound at residue 172–179 (GGAGVGKT).

Belongs to the ATPase alpha/beta chains family. As to quaternary structure, F-type ATPases have 2 components, CF(1) - the catalytic core - and CF(0) - the membrane proton channel. CF(1) has five subunits: alpha(3), beta(3), gamma(1), delta(1), epsilon(1). CF(0) has four main subunits: a(1), b(1), b'(1) and c(9-12).

The protein localises to the plastid. Its subcellular location is the chloroplast thylakoid membrane. It catalyses the reaction ATP + H2O + 4 H(+)(in) = ADP + phosphate + 5 H(+)(out). In terms of biological role, produces ATP from ADP in the presence of a proton gradient across the membrane. The catalytic sites are hosted primarily by the beta subunits. This chain is ATP synthase subunit beta, chloroplastic, found in Montinia caryophyllacea (Wild clove bush).